Consider the following 465-residue polypeptide: Solute carrier family 7 member 12 (465 aa).

Residues 1–6 are Cytoplasmic-facing; the sequence is MQLLRA. The chain crosses the membrane as a helical span at residues 7 to 27; the sequence is LGVFHVSMILFSATLGTGIFV. The Extracellular portion of the chain corresponds to 28-39; the sequence is TPKAVLKYSSLN. The helical transmembrane segment at 40–60 threads the bilayer; it reads IPVSLSIWAGCGLLSIMSALC. The Cytoplasmic portion of the chain corresponds to 61–81; the sequence is NAEIATTYPLSGASYYFLKRT. A helical transmembrane segment spans residues 82–102; the sequence is LGSSVAFLSLWIKLFAHFLGI. Residues 103 to 132 are Extracellular-facing; it reads GAQCLLIATSVIQCFYSGCPAPELPTKCLA. Residues 133–153 traverse the membrane as a helical segment; it reads LAILWSFGIVSARGIKTVAWF. N154 is a topological domain (cytoplasmic). Residues 155-175 form a helical membrane-spanning segment; that stretch reads TVSSFIKLSVLCLISLTVLLV. At 176–202 the chain is on the extracellular side; it reads NGKKENVSRFENALDAELPNASQIADA. A helical transmembrane segment spans residues 203-223; that stretch reads ILQVSYSYLGSSVLIVIAGEI. Residues 224–234 lie on the Cytoplasmic side of the membrane; that stretch reads KRPTETIPKTL. A helical transmembrane segment spans residues 235-255; it reads IYGISIVTVLYLLTNISYLAV. The Extracellular portion of the chain corresponds to 256–280; it reads LTSQEIIFSDSVGVTWMNRVFPSIQ. The chain crosses the membrane as a helical span at residues 281-301; the sequence is WISSFLISAFLLGSVSCGIVS. The Cytoplasmic segment spans residues 302–327; sequence ASRVFYSASQEGEFPSIYSMLNDHHS. A helical transmembrane segment spans residues 328–351; sequence PAVADIQIVILSSVAIISSSIIYL. The Extracellular portion of the chain corresponds to 352–356; that stretch reads VKYVS. A helical membrane pass occupies residues 357 to 375; the sequence is LGSFCINLLQMIGLLKIRY. The Cytoplasmic portion of the chain corresponds to 376 to 386; it reads QNPDIPRPYKV. Residues 387-407 traverse the membrane as a helical segment; that stretch reads WLPFIFGSIALSLFLIFTPVI. Over 408–409 the chain is Extracellular; it reads QS. The chain crosses the membrane as a helical span at residues 410-430; the sequence is PSIEHVYQVVFLFCGFLCYWL. The Cytoplasmic segment spans residues 431-465; sequence QANLNGHATCFDTITCYCQLLFNISPSEDPEEQKN.

It belongs to the amino acid-polyamine-organocation (APC) superfamily. In terms of assembly, probably forms multimers, perhaps with an unknown protein(s). Expressed in kidney and red blood cells (at protein level). Expressed in kidney along the collecting ducts in the cortex, outer and inner medulla. May be expressed in placenta, lungs, spleen and skeletal muscles.

The protein localises to the apical cell membrane. It localises to the basal cell membrane. Its subcellular location is the cytoplasm. Its function is as follows. Probably mediates sodium- and chloride-independent uptake of neutral amino acids. This is Solute carrier family 7 member 12 from Mus musculus (Mouse).